The following is a 195-amino-acid chain: Large ribosomal subunit protein eL15 (195 aa).

Positions 174-195 (GHGRLGSAKSRPSIRANGRLRR) are disordered.

Belongs to the eukaryotic ribosomal protein eL15 family.

The chain is Large ribosomal subunit protein eL15 from Picrophilus torridus (strain ATCC 700027 / DSM 9790 / JCM 10055 / NBRC 100828 / KAW 2/3).